The sequence spans 484 residues: UDP-N-acetylmuramoyl-L-alanyl-D-glutamate--L-lysine ligase (484 aa).

Ser-43 lines the UDP-N-acetyl-alpha-D-muramoyl-L-alanyl-D-glutamate pocket. Residue 119–125 coordinates ATP; sequence GTKGKTT. UDP-N-acetyl-alpha-D-muramoyl-L-alanyl-D-glutamate is bound by residues 161–162, Ser-188, and Arg-196; that span reads TT. The residue at position 230 (Lys-230) is an N6-carboxylysine. The short motif at 405-408 is the L-lysine recognition motif element; the sequence is DDPN.

The protein belongs to the MurCDEF family. MurE subfamily. In terms of processing, carboxylation is probably crucial for Mg(2+) binding and, consequently, for the gamma-phosphate positioning of ATP.

Its subcellular location is the cytoplasm. It carries out the reaction UDP-N-acetyl-alpha-D-muramoyl-L-alanyl-D-glutamate + L-lysine + ATP = UDP-N-acetyl-alpha-D-muramoyl-L-alanyl-gamma-D-glutamyl-L-lysine + ADP + phosphate + H(+). Its pathway is cell wall biogenesis; peptidoglycan biosynthesis. Catalyzes the addition of L-lysine to the nucleotide precursor UDP-N-acetylmuramoyl-L-alanyl-D-glutamate (UMAG) in the biosynthesis of bacterial cell-wall peptidoglycan. This Streptococcus agalactiae serotype V (strain ATCC BAA-611 / 2603 V/R) protein is UDP-N-acetylmuramoyl-L-alanyl-D-glutamate--L-lysine ligase.